A 130-amino-acid chain; its full sequence is Insulin-like growth factor 1 (130 aa).

The signal sequence occupies residues 1–25 (MHAVSSSHLFYLAFCLLVLTSSATA). Residues 26-54 (GPETLCGAELVDALQFVCGDRGFYFNKPT) form a b region. 3 disulfides stabilise this stretch: cysteine 31–cysteine 73, cysteine 43–cysteine 86, and cysteine 72–cysteine 77. Residues 55-66 (GYGSSSRRAPQT) are c. The tract at residues 67 to 87 (GIVDECCFRSCDLRRLEMYCA) is a. The segment at 88–95 (PLKPAKSA) is d. Positions 96–130 (RSVRAQRHTDMPKTQKEVHLKNASRGSAGNKNYRM) are cleaved as a propeptide — e peptide. Residues 97-130 (SVRAQRHTDMPKTQKEVHLKNASRGSAGNKNYRM) are disordered. Positions 102–115 (RHTDMPKTQKEVHL) are enriched in basic and acidic residues. The span at 119–130 (SRGSAGNKNYRM) shows a compositional bias: polar residues.

The protein belongs to the insulin family. As to quaternary structure, forms a ternary complex with IGFR1 and ITGAV:ITGB3. Forms a ternary complex with IGFR1 and ITGA6:ITGB4. Forms a ternary complex with IGFBP3 and ALS.

It is found in the secreted. In terms of biological role, the insulin-like growth factors, isolated from plasma, are structurally and functionally related to insulin but have a much higher growth-promoting activity. May be a physiological regulator of [1-14C]-2-deoxy-D-glucose (2DG) transport and glycogen synthesis in osteoblasts. Stimulates glucose transport in bone-derived osteoblastic (PyMS) cells and is effective at much lower concentrations than insulin, not only regarding glycogen and DNA synthesis but also with regard to enhancing glucose uptake. May play a role in synapse maturation. Ca(2+)-dependent exocytosis of IGF1 is required for sensory perception of smell in the olfactory bulb. Acts as a ligand for IGF1R. Binds to the alpha subunit of IGF1R, leading to the activation of the intrinsic tyrosine kinase activity which autophosphorylates tyrosine residues in the beta subunit thus initiating a cascade of down-stream signaling events leading to activation of the PI3K-AKT/PKB and the Ras-MAPK pathways. Binds to integrins ITGAV:ITGB3 and ITGA6:ITGB4. Its binding to integrins and subsequent ternary complex formation with integrins and IGFR1 are essential for IGF1 signaling. Induces the phosphorylation and activation of IGFR1, MAPK3/ERK1, MAPK1/ERK2 and AKT1. As part of the MAPK/ERK signaling pathway, acts as a negative regulator of apoptosis in cardiomyocytes via promotion of STUB1/CHIP-mediated ubiquitination and degradation of ICER-type isoforms of CREM. This is Insulin-like growth factor 1 from Cavia porcellus (Guinea pig).